A 100-amino-acid chain; its full sequence is Small ribosomal subunit protein uS14c (100 aa).

Belongs to the universal ribosomal protein uS14 family. Part of the 30S ribosomal subunit.

Its subcellular location is the plastid. It is found in the chloroplast. Binds 16S rRNA, required for the assembly of 30S particles. This is Small ribosomal subunit protein uS14c from Buxus microphylla (Littleleaf boxwood).